A 434-amino-acid chain; its full sequence is Ribulose bisphosphate carboxylase-like protein (434 aa).

K198, D200, and E201 together coordinate Mg(2+). At K198 the chain carries N6-carboxylysine.

This sequence belongs to the RuBisCO large chain family. Type IV subfamily. In terms of assembly, homodimer. The cofactor is Mg(2+).

In terms of biological role, may be involved in sulfur metabolism and oxidative stress response. Does not show RuBisCO activity. This Chlorobaculum thiosulfatiphilum (Chlorobium limicola f.sp. thiosulfatophilum) protein is Ribulose bisphosphate carboxylase-like protein.